The primary structure comprises 439 residues: Xylose isomerase (439 aa).

Catalysis depends on residues His101 and Asp104. Glu232, Glu268, His271, Asp296, Asp307, Asp309, and Asp339 together coordinate Mg(2+).

This sequence belongs to the xylose isomerase family. Homotetramer. Mg(2+) serves as cofactor.

The protein localises to the cytoplasm. The enzyme catalyses alpha-D-xylose = alpha-D-xylulofuranose. The sequence is that of Xylose isomerase (xylA) from Thermoanaerobacterium thermosaccharolyticum (strain ATCC 7956 / DSM 571 / NCIMB 9385 / NCA 3814 / NCTC 13789 / WDCM 00135 / 2032) (Clostridium thermosaccharolyticum).